We begin with the raw amino-acid sequence, 264 residues long: Teichoic acids export ATP-binding protein TagH (264 aa).

In terms of domain architecture, ABC transporter spans 5-243; that stretch reads VNIKNVTKEY…YEAFLNDFKK (239 aa). Residue 57 to 64 participates in ATP binding; sequence GINGSGKS.

This sequence belongs to the ABC transporter superfamily. Teichoic acids exporter (TC 3.A.1.104.1) family. In terms of assembly, the complex is composed of two ATP-binding proteins (TagH) and two transmembrane proteins (TagG).

Its subcellular location is the cell membrane. The catalysed reaction is ATP + H2O + teichoic acidSide 1 = ADP + phosphate + teichoic acidSide 2.. Functionally, part of the ABC transporter complex TagGH involved in teichoic acids export. Responsible for energy coupling to the transport system. The polypeptide is Teichoic acids export ATP-binding protein TagH (Staphylococcus aureus (strain Mu50 / ATCC 700699)).